Here is a 565-residue protein sequence, read N- to C-terminus: FACT complex subunit ctc-1 (565 aa).

Disordered regions lie at residues 151-173 (GNDG…ASAG) and 477-565 (LGDD…KKTA). Gly residues predominate over residues 152–165 (NDGGKSNGHSGTGG). Acidic residues-rich tracts occupy residues 478–489 (GDDDMASSDEEA), 500–522 (DEDE…AEEY), and 532–553 (GSEE…DDDE).

This sequence belongs to the SSRP1 family. In terms of assembly, forms a stable heterodimer with ctc-2/spt16. The dimer of ctc-1 and ctc-2 weakly associates with multiple molecules of nhp-1/nhp6 to form the FACT complex.

Its subcellular location is the nucleus. The protein localises to the chromosome. Functionally, component of the FACT complex, a general chromatin factor that acts to reorganize nucleosomes. The FACT complex is involved in multiple processes that require DNA as a template such as mRNA elongation, DNA replication and DNA repair. During transcription elongation the FACT complex acts as a histone chaperone that both destabilizes and restores nucleosomal structure. It facilitates the passage of RNA polymerase II and transcription by promoting the dissociation of one histone H2A-H2B dimer from the nucleosome, then subsequently promotes the reestablishment of the nucleosome following the passage of RNA polymerase II. This is FACT complex subunit ctc-1 (ctc-1) from Neurospora crassa (strain ATCC 24698 / 74-OR23-1A / CBS 708.71 / DSM 1257 / FGSC 987).